The chain runs to 380 residues: Putative 8-amino-7-oxononanoate synthase (380 aa).

R18 is a substrate binding site. Residue 106-107 (GY) participates in pyridoxal 5'-phosphate binding. A substrate-binding site is contributed by H131. Residues S179, 205–208 (DEAH), and 236–239 (TFGK) contribute to the pyridoxal 5'-phosphate site. Position 239 is an N6-(pyridoxal phosphate)lysine (K239). A substrate-binding site is contributed by T352.

This sequence belongs to the class-II pyridoxal-phosphate-dependent aminotransferase family. BioF subfamily. As to quaternary structure, homodimer. The cofactor is pyridoxal 5'-phosphate.

It carries out the reaction 6-carboxyhexanoyl-[ACP] + L-alanine + H(+) = (8S)-8-amino-7-oxononanoate + holo-[ACP] + CO2. Its pathway is cofactor biosynthesis; biotin biosynthesis. Its function is as follows. Catalyzes the decarboxylative condensation of pimeloyl-[acyl-carrier protein] and L-alanine to produce 8-amino-7-oxononanoate (AON), [acyl-carrier protein], and carbon dioxide. The sequence is that of Putative 8-amino-7-oxononanoate synthase (bioF) from Neisseria meningitidis serogroup B (strain ATCC BAA-335 / MC58).